The primary structure comprises 558 residues: Ribonuclease Y (558 aa).

The chain crosses the membrane as a helical span at residues 3-23 (VLSILLILVAVGVGIFVGRQF). Residues 248-311 (TTTTVELPSN…EIAKEALQRL (64 aa)) form the KH domain. The region spanning 374–467 (VLLHSKEVAY…VCAADALSAA (94 aa)) is the HD domain.

The protein belongs to the RNase Y family.

The protein localises to the cell membrane. Functionally, endoribonuclease that initiates mRNA decay. This is Ribonuclease Y from Aquifex aeolicus (strain VF5).